We begin with the raw amino-acid sequence, 182 residues long: KxDL motif-containing protein 1 (182 aa).

Residues 124 to 135 (TTTATSEQSTES) show a composition bias toward low complexity. The interval 124–182 (TTTATSEQSTESCDTSPDVISPTISCCSEDPSQEHTDTPTSDSHEQPVLRDEGPDSADI) is disordered. Basic and acidic residues predominate over residues 155-176 (SQEHTDTPTSDSHEQPVLRDEG).

Belongs to the KXD1 family. Associates with the BLOC-1 complex.

Its subcellular location is the lysosome membrane. In terms of biological role, as part of a BORC-like complex may play a role in lysosomes movement and localization at the cell periphery. Associated with the cytosolic face of lysosomes, this complex may couple lysosomes to microtubule plus-end-directed kinesin motor. May also be involved in the biogenesis of lysosome-related organelles such as melanosomes. This is KxDL motif-containing protein 1 (kxd1) from Danio rerio (Zebrafish).